The following is a 108-amino-acid chain: Latartoxin-2c (108 aa).

A signal peptide spans 1 to 19; it reads MKVLVITALCFILLQNVLG. Positions 20 to 42 are cleaved as a propeptide — removed in mature form; that stretch reads EDTYEDLQNYIENLINENQDEAR. A Processing quadruplet motif motif is present at residues 39-42; the sequence is DEAR. 4 disulfide bridges follow: Cys44–Cys61, Cys51–Cys72, Cys60–Cys84, and Cys74–Cys82. An Isoleucine amide modification is found at Ile107.

The protein belongs to the neurotoxin 19 (CSTX) family. 11 (latartoxin) subfamily. Post-translationally, contains 4 disulfide bonds. In terms of processing, cleavage of the propeptide depends on the processing quadruplet motif (XXXR, with at least one of X being E). In terms of tissue distribution, expressed by the venom gland.

The protein resides in the secreted. Its function is as follows. Insect toxin. The chain is Latartoxin-2c from Lachesana tarabaevi (Spider).